The primary structure comprises 72 residues: MKLSIFAAIFMAFVSLNQVFGSMTHSVKSKEAIISADESLVKPIDAGQAQPEGCPVCARLGVLCPYHYRADS.

An N-terminal signal peptide occupies residues 1–21 (MKLSIFAAIFMAFVSLNQVFG).

This sequence belongs to the CPGH1 family.

The protein localises to the secreted. It is found in the host cell. The protein resides in the host cytoplasm. Its subcellular location is the host nucleus. Functionally, rust effector delivered into infected tissues to modulate host functions and contribute to pathogen virulence. Enhances leaf colonization by the bacteria Pseudomonas syringae and the oomycete Hyaloperonospora arabidopsidis pathogens in an Arabidopsis thaliana infection model. This Melampsora larici-populina (strain 98AG31 / pathotype 3-4-7) (Poplar leaf rust fungus) protein is Candidate secreted effector protein MPL124499.